The primary structure comprises 317 residues: Melanocyte-stimulating hormone receptor (317 aa).

Residues 1–37 (MPVQGSQRRLLGSLNSTPTATPHLGLAANQTGARCLE) lie on the Extracellular side of the membrane. N-linked (GlcNAc...) asparagine glycosylation occurs at Asn-29. A helical transmembrane segment spans residues 38 to 63 (VSIPDGLFLSLGLVSLVENVLVVTAI). Residues 64–72 (AKNRNLHSP) are Cytoplasmic-facing. Residues 73 to 93 (MYCFICCLALSDLLVSGSNML) traverse the membrane as a helical segment. The Extracellular segment spans residues 94–118 (ETAVILLLEAGALAARAAVVQQLDN). The chain crosses the membrane as a helical span at residues 119–140 (VIDVITCSSMLSSLCFLGAIAV). Over 141–163 (DRYISIFYALRYHSIVTLPRARR) the chain is Cytoplasmic. Residues 164–183 (AVAAIWVASVLFSMLFIAYY) form a helical membrane-spanning segment. Over 184–191 (DHAAVLLC) the chain is Extracellular. Residues 192–211 (LVVFFLAMLVLMAVLYVHML) traverse the membrane as a helical segment. The Cytoplasmic segment spans residues 212 to 240 (ARACQHAQGIARLHKRQCPAHQGFGLKGA). A helical transmembrane segment spans residues 241–266 (ATLTILLGIFFLCWGPFFLHLTLIVL). Topologically, residues 267-279 (CPQHPTCSCIFKN) are extracellular. The chain crosses the membrane as a helical span at residues 280–300 (FNLFLALIICNAIIDPLIYAF). Residues 301–317 (RSQELRRTLKEVLLCSW) lie on the Cytoplasmic side of the membrane. Cys-315 carries the S-palmitoyl cysteine lipid modification.

Belongs to the G-protein coupled receptor 1 family. As to quaternary structure, interacts with MGRN1, but does not undergo MGRN1-mediated ubiquitination; this interaction competes with GNAS-binding and thus inhibits agonist-induced cAMP production. Interacts with OPN3; the interaction results in a decrease in MC1R-mediated cAMP signaling and ultimately a decrease in melanin production in melanocytes.

Its subcellular location is the cell membrane. Its function is as follows. Receptor for MSH (alpha, beta and gamma) and ACTH. The activity of this receptor is mediated by G proteins which activate adenylate cyclase. Mediates melanogenesis, the production of eumelanin (black/brown) and phaeomelanin (red/yellow), via regulation of cAMP signaling in melanocytes. The protein is Melanocyte-stimulating hormone receptor (MC1R) of Chlorocebus aethiops (Green monkey).